Consider the following 210-residue polypeptide: MGSSSGQSGYDLSFKILLIGDSGVGKSSLLVSFISSSVEDLAPTIGVDFKIKQLTVGGKRLKLTIWDTAGQERFRTLTSSYYRGAQGIILVYDVTRRETFTNLVDVWGKEIELYSTNQECVRMLVGNKVDRESERGVSREEGIALAKELNCMFLECSARTRQNVEQCFEELALKIMEVPSLLEEGSSAVKRNILKQKPEHQTNTQSGCCS.

G20–S27 contacts GTP. An Effector region motif is present at residues L41–F49. GTP-binding positions include D67–Q71, N127–D130, and S157–A158. S-geranylgeranyl cysteine attachment occurs at residues C208 and C209.

Belongs to the small GTPase superfamily. Rab family. Interacts with XI-2/MYA2.

The protein localises to the cell membrane. Its subcellular location is the cytoplasm. In terms of biological role, intracellular vesicle trafficking and protein transport. The sequence is that of Ras-related protein RABC2a (RABC2A) from Arabidopsis thaliana (Mouse-ear cress).